The chain runs to 709 residues: MSNKEEHVDETSASGVKEVSSIAARHDNGYAPSLITSTSGMDSFQSHALLNDPTLIEDYSDIINNRPTSGSKLTLGNEDSESMGGSVVVTPTSNKSSPFNSKLNILSNAAEKGHDVLRNRDDDKELEEENVEKHMHSNSKRDQRHYKENSSELPDSYDYSDSEFEDNLERRLQEIETDSVDSADKDEVHFSVNNTMNPDVDDFSDGLKYAISEDEDEEENYSDDDDFDRKFQDSGFQGEKDDLEEENDDYQPLSPPRELDPDKLYALYAFNGHDSSHCQLGQDEPCILLNDQDAYWWLVKRITDGKIGFAPAEILETFPERLARLNCWKNENMSSQSVASSDSKDDSISSGNKNQSDAESIIPTPALNGYGKGNKSVSFNDVVGYADRFIDDAIEDTSLDSNDDGGEGNGQSYDDDVDNDKETKVTHRDEYTEAKLNFGKFQDDDTSDVVSDVSFSTSLNTPLNVKKVRRQDNKNESEPKTSSSKDREDDYNANRYVGQEKSEPVDSDYDTDLKKVFEAPRMPFANGMAKSDSQNSLSTIGEFSPSSSEWTNESPSTPIVEESSSIPSSRAIKDISQYIHAKSKIEETTNVENTEGQIQASLGSSGGMANQTDAEQPKEELEKHHSTPEEEKQSTLSLHSSSEEDFYMDEQRAVSSASINSSLSGSRALSNTNMSDPASKPNSLVQHLYAPVFDRMDVLMKQLDEIIRK.

At serine 2 the chain carries N-acetylserine. Residues aspartate 61 to glutamate 258 form a disordered region. Composition is skewed to polar residues over residues isoleucine 62 to threonine 74 and valine 89 to serine 107. Composition is skewed to basic and acidic residues over residues glutamate 111–aspartate 123 and valine 131–serine 150. Tyrosine 159 carries the post-translational modification Phosphotyrosine. Phosphoserine occurs at positions 160 and 162. Threonine 177 carries the post-translational modification Phosphothreonine. Phosphoserine occurs at positions 212 and 222. Residues serine 212–aspartate 226 are compositionally biased toward acidic residues. Positions leucine 259 to glutamate 320 constitute an SH3 domain. Residues serine 334–leucine 367 form a disordered region. Serine 376, serine 378, and serine 401 each carry phosphoserine. The span at aspartate 396–glycine 406 shows a compositional bias: acidic residues. 4 disordered regions span residues aspartate 396–lysine 421, asparagine 464–aspartate 510, alanine 525–alanine 571, and alanine 600–lysine 680. The segment covering arginine 470 to proline 504 has biased composition (basic and acidic residues). Serine 507 is subject to Phosphoserine. Residues serine 531–asparagine 552 are compositionally biased toward polar residues. The segment covering glutamate 553 to serine 569 has biased composition (low complexity). The segment covering alanine 600 to alanine 614 has biased composition (polar residues). A compositionally biased stretch (basic and acidic residues) spans glutamate 615–glutamine 633. 3 positions are modified to phosphoserine: serine 655, serine 658, and serine 670. The segment covering serine 655 to asparagine 671 has biased composition (low complexity).

In terms of assembly, interacts with GLC7.

In terms of biological role, important for bud site selection. Seems to be a regulatory subunit of the BUD14-GLC7 type-I phosphatase complex. The BUD14-GLC7 complex is necessary to regulate microtubule dynamics at the cortex and may function as a specific activator of the dynein complex. This is Bud site selection protein 14 (BUD14) from Saccharomyces cerevisiae (strain ATCC 204508 / S288c) (Baker's yeast).